Consider the following 373-residue polypeptide: Alginate lyase (373 aa).

An N-terminal signal peptide occupies residues 1–25 (MRLPMQKLLIPTLLGLAMFAGSVNA). Substrate-binding positions include 66-67 (SK), 139-140 (HT), and Tyr257.

It belongs to the polysaccharide lyase 5 family.

Its subcellular location is the periplasm. It catalyses the reaction Eliminative cleavage of alginate to give oligosaccharides with 4-deoxy-alpha-L-erythro-hex-4-enuronosyl groups at their non-reducing ends and beta-D-mannuronate at their reducing end.. Catalyzes the depolymerization of alginate by cleaving the beta-1,4 glycosidic bond between two adjacent sugar residues via a beta-elimination mechanism. May serve to degrade mislocalized alginate that is trapped in the periplasmic space. The polypeptide is Alginate lyase (Pseudomonas fluorescens).